The chain runs to 142 residues: Large ribosomal subunit protein uL11 (142 aa).

This sequence belongs to the universal ribosomal protein uL11 family. As to quaternary structure, part of the ribosomal stalk of the 50S ribosomal subunit. Interacts with L10 and the large rRNA to form the base of the stalk. L10 forms an elongated spine to which L12 dimers bind in a sequential fashion forming a multimeric L10(L12)X complex. Post-translationally, one or more lysine residues are methylated.

Its function is as follows. Forms part of the ribosomal stalk which helps the ribosome interact with GTP-bound translation factors. In Citrobacter koseri (strain ATCC BAA-895 / CDC 4225-83 / SGSC4696), this protein is Large ribosomal subunit protein uL11.